Reading from the N-terminus, the 579-residue chain is Aspartate--tRNA(Asp/Asn) ligase (579 aa).

L-aspartate is bound at residue glutamate 171. An aspartate region spans residues glutamine 195–lysine 198. Arginine 217 lines the L-aspartate pocket. ATP-binding positions include arginine 217–glutamate 219 and glutamine 226. Histidine 444 is an L-aspartate binding site. Position 475 (glutamate 475) interacts with ATP. Arginine 482 is a binding site for L-aspartate. Glycine 527–arginine 530 contacts ATP.

The protein belongs to the class-II aminoacyl-tRNA synthetase family. Type 1 subfamily. As to quaternary structure, homodimer.

It is found in the cytoplasm. It carries out the reaction tRNA(Asx) + L-aspartate + ATP = L-aspartyl-tRNA(Asx) + AMP + diphosphate. Functionally, aspartyl-tRNA synthetase with relaxed tRNA specificity since it is able to aspartylate not only its cognate tRNA(Asp) but also tRNA(Asn). Reaction proceeds in two steps: L-aspartate is first activated by ATP to form Asp-AMP and then transferred to the acceptor end of tRNA(Asp/Asn). The sequence is that of Aspartate--tRNA(Asp/Asn) ligase from Thermotoga maritima (strain ATCC 43589 / DSM 3109 / JCM 10099 / NBRC 100826 / MSB8).